Reading from the N-terminus, the 635-residue chain is MTAEATVETRGFETEAKQLLHLMIHSLYSNKEIFLRELVSNASDAADKLRFEALKQPELLEQDSELKITIDFDKEAKTLSITDNGIGMNRDEVIANLGTIARSGTAQFMANLSGDQKKDSQLIGQFGVGFYSAFIVADKVEVLTRRAGSEPSEGVRWVSEGEAEYSIENIEKAARGTTIILHLKKDQEEFADGWRLRSIIKKYSDHISLPVEMPKEAAPGEDKEEKAEVEYEVINTAKALWARSRSDVTDEEYKEFYKHVSHDYTDPLSWSHNRVEGKLDYTSLIYIPSKAPFDMYNREKPRGVKLYVQRTFIMDDAEQFLPLYLRFIKGVVDSNDLSLNVSREILQQDPNIDSMRSALTKRVLDMLEKMAKKEPEKYATFWKEFGEVLKEGPAEDFANKEKIAKLLRFATTHKNTNEQDQSLDAYIERMKEGQDKIYYVVAENFNTAKNSPHLEVFRKKGIEVLLLSNRIDDWLMGHLMEYDGKQFQDVGKGSLDLGKLDSEEDKKEQEKVEEAMAPFVERMKAALAEQVEEVRITHRLTESPACLVVGEHDMGAQMRRLLEAAGQAVPESKPIIEINPTHPLVQKLDQEQDEDRFKDLSHILFDQASLAEGGSLKDPAAYVSRLNKLLLELSN.

The a; substrate-binding stretch occupies residues 1 to 343 (MTAEATVETR…SNDLSLNVSR (343 aa)). Residues 344–560 (EILQQDPNID…EHDMGAQMRR (217 aa)) form a b region. Positions 561 to 635 (LLEAAGQAVP…LNKLLLELSN (75 aa)) are c.

The protein belongs to the heat shock protein 90 family. Homodimer.

The protein localises to the cytoplasm. In terms of biological role, molecular chaperone. Has ATPase activity. In Saccharophagus degradans (strain 2-40 / ATCC 43961 / DSM 17024), this protein is Chaperone protein HtpG.